The sequence spans 108 residues: uncharacterized protein (108 aa).

Polar residues predominate over residues 1-12 (MSNQQKQLQLPS). The interval 1–22 (MSNQQKQLQLPSASIKKPKEKQ) is disordered.

This is an uncharacterized protein from Dictyostelium discoideum (Social amoeba).